The chain runs to 221 residues: Uridylate kinase (221 aa).

7 to 11 (KISGK) is an ATP binding site. G43 is a binding site for UMP. ATP is bound by residues G44 and R48. UMP is bound by residues D62 and 109–115 (LQPGQST). 2 residues coordinate ATP: T135 and Y141.

The protein belongs to the UMP kinase family. In terms of assembly, homohexamer.

It localises to the cytoplasm. The catalysed reaction is UMP + ATP = UDP + ADP. It participates in pyrimidine metabolism; CTP biosynthesis via de novo pathway; UDP from UMP (UMPK route): step 1/1. Inhibited by UTP. In terms of biological role, catalyzes the reversible phosphorylation of UMP to UDP. The chain is Uridylate kinase from Ignicoccus hospitalis (strain KIN4/I / DSM 18386 / JCM 14125).